The chain runs to 470 residues: Argininosuccinate lyase (470 aa).

Belongs to the lyase 1 family. Argininosuccinate lyase subfamily.

The protein resides in the cytoplasm. The catalysed reaction is 2-(N(omega)-L-arginino)succinate = fumarate + L-arginine. The protein operates within amino-acid biosynthesis; L-arginine biosynthesis; L-arginine from L-ornithine and carbamoyl phosphate: step 3/3. This Mycolicibacterium vanbaalenii (strain DSM 7251 / JCM 13017 / BCRC 16820 / KCTC 9966 / NRRL B-24157 / PYR-1) (Mycobacterium vanbaalenii) protein is Argininosuccinate lyase.